An 83-amino-acid polypeptide reads, in one-letter code: Cell division topological specificity factor (83 aa).

This sequence belongs to the MinE family.

Its function is as follows. Prevents the cell division inhibition by proteins MinC and MinD at internal division sites while permitting inhibition at polar sites. This ensures cell division at the proper site by restricting the formation of a division septum at the midpoint of the long axis of the cell. This chain is Cell division topological specificity factor, found in Acidithiobacillus ferrooxidans (strain ATCC 23270 / DSM 14882 / CIP 104768 / NCIMB 8455) (Ferrobacillus ferrooxidans (strain ATCC 23270)).